Consider the following 305-residue polypeptide: UDP-3-O-acyl-N-acetylglucosamine deacetylase (305 aa).

Zn(2+) contacts are provided by histidine 78, histidine 237, and aspartate 241. The Proton donor role is filled by histidine 264.

It belongs to the LpxC family. Requires Zn(2+) as cofactor.

The enzyme catalyses a UDP-3-O-[(3R)-3-hydroxyacyl]-N-acetyl-alpha-D-glucosamine + H2O = a UDP-3-O-[(3R)-3-hydroxyacyl]-alpha-D-glucosamine + acetate. The protein operates within glycolipid biosynthesis; lipid IV(A) biosynthesis; lipid IV(A) from (3R)-3-hydroxytetradecanoyl-[acyl-carrier-protein] and UDP-N-acetyl-alpha-D-glucosamine: step 2/6. Its function is as follows. Catalyzes the hydrolysis of UDP-3-O-myristoyl-N-acetylglucosamine to form UDP-3-O-myristoylglucosamine and acetate, the committed step in lipid A biosynthesis. This Burkholderia thailandensis (strain ATCC 700388 / DSM 13276 / CCUG 48851 / CIP 106301 / E264) protein is UDP-3-O-acyl-N-acetylglucosamine deacetylase.